Consider the following 705-residue polypeptide: Translation initiation factor IF-2 (705 aa).

Positions 40-124 are disordered; the sequence is DDQIKALDKK…QPAAPKEIPS (85 aa). The segment covering 41 to 58 has biased composition (basic and acidic residues); that stretch reads DQIKALDKKFKKEQKNDN. Residues 59–77 show a composition bias toward low complexity; sequence KQSTQNNHQKSNNQNQNKG. Residues 94 to 108 are compositionally biased toward basic residues; that stretch reads KGNKKNNRNNKKNNK. The 170-residue stretch at 207–376 folds into the tr-type G domain; the sequence is ERPAVVTIMG…GLVAEVQELK (170 aa). The G1 stretch occupies residues 216-223; that stretch reads GHVDHGKT. Position 216 to 223 (216 to 223) interacts with GTP; that stretch reads GHVDHGKT. Positions 241-245 are G2; sequence GITQH. The interval 262 to 265 is G3; it reads DTPG. GTP-binding positions include 262-266 and 316-319; these read DTPGH and NKID. Positions 316-319 are G4; the sequence is NKID. The interval 352 to 354 is G5; sequence SAL.

Belongs to the TRAFAC class translation factor GTPase superfamily. Classic translation factor GTPase family. IF-2 subfamily.

The protein resides in the cytoplasm. One of the essential components for the initiation of protein synthesis. Protects formylmethionyl-tRNA from spontaneous hydrolysis and promotes its binding to the 30S ribosomal subunits. Also involved in the hydrolysis of GTP during the formation of the 70S ribosomal complex. The sequence is that of Translation initiation factor IF-2 from Staphylococcus aureus (strain USA300).